The primary structure comprises 512 residues: Cytochrome P450 1A1 (512 aa).

The interval serine 29–proline 40 is mitochondrial targeting signal. O-linked (GlcNAc) serine glycosylation is present at serine 67. Phenylalanine 224 is a binding site for substrate. A heme-binding site is contributed by cysteine 457.

This sequence belongs to the cytochrome P450 family. In terms of assembly, interacts with cytosolic chaperones HSP70 and HSP90; this interaction is required for initial targeting to mitochondria. Interacts (via mitochondrial targeting signal) with TOMM40 (via N-terminus); this interaction is required for translocation across the mitochondrial outer membrane. It depends on heme as a cofactor.

It localises to the endoplasmic reticulum membrane. The protein resides in the mitochondrion inner membrane. Its subcellular location is the microsome membrane. It is found in the cytoplasm. It carries out the reaction an organic molecule + reduced [NADPH--hemoprotein reductase] + O2 = an alcohol + oxidized [NADPH--hemoprotein reductase] + H2O + H(+). The enzyme catalyses estrone + reduced [NADPH--hemoprotein reductase] + O2 = 2-hydroxyestrone + oxidized [NADPH--hemoprotein reductase] + H2O + H(+). It catalyses the reaction estrone + reduced [NADPH--hemoprotein reductase] + O2 = 4-hydroxyestrone + oxidized [NADPH--hemoprotein reductase] + H2O + H(+). The catalysed reaction is estrone + reduced [NADPH--hemoprotein reductase] + O2 = 6alpha-hydroxyestrone + oxidized [NADPH--hemoprotein reductase] + H2O + H(+). It carries out the reaction estrone + reduced [NADPH--hemoprotein reductase] + O2 = 15alpha-hydroxyestrone + oxidized [NADPH--hemoprotein reductase] + H2O + H(+). The enzyme catalyses estrone + reduced [NADPH--hemoprotein reductase] + O2 = 16alpha-hydroxyestrone + oxidized [NADPH--hemoprotein reductase] + H2O + H(+). It catalyses the reaction 17beta-estradiol + reduced [NADPH--hemoprotein reductase] + O2 = 2-hydroxy-17beta-estradiol + oxidized [NADPH--hemoprotein reductase] + H2O + H(+). The catalysed reaction is 17beta-estradiol + reduced [NADPH--hemoprotein reductase] + O2 = 4-hydroxy-17beta-estradiol + oxidized [NADPH--hemoprotein reductase] + H2O + H(+). It carries out the reaction 17beta-estradiol + reduced [NADPH--hemoprotein reductase] + O2 = 6alpha-hydroxy-17beta-estradiol + oxidized [NADPH--hemoprotein reductase] + H2O + H(+). The enzyme catalyses 17beta-estradiol + reduced [NADPH--hemoprotein reductase] + O2 = 7alpha-hydroxy-17beta-estradiol + oxidized [NADPH--hemoprotein reductase] + H2O + H(+). It catalyses the reaction 17beta-estradiol + reduced [NADPH--hemoprotein reductase] + O2 = 15alpha-hydroxy-17beta-estradiol + oxidized [NADPH--hemoprotein reductase] + H2O + H(+). The catalysed reaction is (5Z,8Z,11Z)-eicosatrienoate + reduced [NADPH--hemoprotein reductase] + O2 = 19-hydroxy-(5Z,8Z,11Z)-eicosatrienoate + oxidized [NADPH--hemoprotein reductase] + H2O + H(+). It carries out the reaction (5Z,8Z,11Z,14Z)-eicosatetraenoate + reduced [NADPH--hemoprotein reductase] + O2 = 16-hydroxy-(5Z,8Z,11Z,14Z)-eicosatetraenoate + oxidized [NADPH--hemoprotein reductase] + H2O + H(+). The enzyme catalyses (5Z,8Z,11Z,14Z)-eicosatetraenoate + reduced [NADPH--hemoprotein reductase] + O2 = 17-hydroxy-(5Z,8Z,11Z,14Z)-eicosatetraenoate + oxidized [NADPH--hemoprotein reductase] + H2O + H(+). It catalyses the reaction (5Z,8Z,11Z,14Z)-eicosatetraenoate + reduced [NADPH--hemoprotein reductase] + O2 = 18-hydroxy-(5Z,8Z,11Z,14Z)-eicosatetraenoate + oxidized [NADPH--hemoprotein reductase] + H2O + H(+). The catalysed reaction is (5Z,8Z,11Z,14Z)-eicosatetraenoate + reduced [NADPH--hemoprotein reductase] + O2 = 19-hydroxy-(5Z,8Z,11Z,14Z)-eicosatetraenoate + oxidized [NADPH--hemoprotein reductase] + H2O + H(+). It carries out the reaction (5Z,8Z,11Z,14Z,17Z)-eicosapentaenoate + reduced [NADPH--hemoprotein reductase] + O2 = 19-hydroxy-(5Z,8Z,11Z,14Z,17Z)-eicosapentaenoate + oxidized [NADPH--hemoprotein reductase] + H2O + H(+). The enzyme catalyses (5Z,8Z,11Z,14Z)-eicosatetraenoate + reduced [NADPH--hemoprotein reductase] + O2 = (8R,9S)-epoxy-(5Z,11Z,14Z)-eicosatrienoate + oxidized [NADPH--hemoprotein reductase] + H2O + H(+). It catalyses the reaction (5Z,8Z,11Z,14Z)-eicosatetraenoate + reduced [NADPH--hemoprotein reductase] + O2 = (11R,12S)-epoxy-(5Z,8Z,14Z)-eicosatrienoate + oxidized [NADPH--hemoprotein reductase] + H2O + H(+). The catalysed reaction is (5Z,8Z,11Z,14Z)-eicosatetraenoate + reduced [NADPH--hemoprotein reductase] + O2 = (14S,15R)-epoxy-(5Z,8Z,11Z)-eicosatrienoate + oxidized [NADPH--hemoprotein reductase] + H2O + H(+). It carries out the reaction (5Z,8Z,11Z,14Z)-eicosatetraenoate + reduced [NADPH--hemoprotein reductase] + O2 = (14R,15S)-epoxy-(5Z,8Z,11Z)-eicosatrienoate + oxidized [NADPH--hemoprotein reductase] + H2O + H(+). The enzyme catalyses (5Z,8Z,11Z,14Z,17Z)-eicosapentaenoate + reduced [NADPH--hemoprotein reductase] + O2 = (17R,18S)-epoxy-(5Z,8Z,11Z,14Z)-eicosatetraenoate + oxidized [NADPH--hemoprotein reductase] + H2O + H(+). It catalyses the reaction (4Z,7Z,10Z,13Z,16Z,19Z)-docosahexaenoate + reduced [NADPH--hemoprotein reductase] + O2 = (19S,20R)-epoxy-(4Z,7Z,10Z,13Z,16Z)-docosapentaenoate + oxidized [NADPH--hemoprotein reductase] + H2O + H(+). The catalysed reaction is (4Z,7Z,10Z,13Z,16Z,19Z)-docosahexaenoate + reduced [NADPH--hemoprotein reductase] + O2 = (19R,20S)-epoxy-(4Z,7Z,10Z,13Z,16Z)-docosapentaenoate + oxidized [NADPH--hemoprotein reductase] + H2O + H(+). It carries out the reaction all-trans-retinol + reduced [NADPH--hemoprotein reductase] + O2 = all-trans-retinal + oxidized [NADPH--hemoprotein reductase] + 2 H2O + H(+). The enzyme catalyses all-trans-retinal + reduced [NADPH--hemoprotein reductase] + O2 = all-trans-retinoate + oxidized [NADPH--hemoprotein reductase] + H2O + 2 H(+). It catalyses the reaction (13S)-hydroperoxy-(9Z,11E)-octadecadienoate = 13-oxo-(9Z,11E)-octadecadienoate + H2O. The catalysed reaction is (12S)-hydroperoxy-(5Z,8Z,10E,14Z)-eicosatetraenoate = 12-oxo-(5Z,8Z,10E,14Z)-eicosatetraenoate + H2O. It carries out the reaction (15S)-hydroperoxy-(5Z,8Z,11Z,13E)-eicosatetraenoate = 15-oxo-(5Z,8Z,11Z,13E)-eicosatetraenoate + H2O. The enzyme catalyses (5S)-hydroperoxy-(6E,8Z,11Z,14Z)-eicosatetraenoate = 5-oxo-(6E,8Z,11Z,14Z)-eicosatetraenoate + H2O. It participates in steroid hormone biosynthesis. The protein operates within lipid metabolism; fatty acid metabolism. Its pathway is cofactor metabolism; retinol metabolism. Functionally, a cytochrome P450 monooxygenase involved in the metabolism of various endogenous substrates, including fatty acids, steroid hormones and vitamins. Mechanistically, uses molecular oxygen inserting one oxygen atom into a substrate, and reducing the second into a water molecule, with two electrons provided by NADPH via cytochrome P450 reductase (CPR; NADPH-ferrihemoprotein reductase). Catalyzes the hydroxylation of carbon-hydrogen bonds. Exhibits high catalytic activity for the formation of hydroxyestrogens from estrone (E1) and 17beta-estradiol (E2), namely 2-hydroxy E1 and E2, as well as D-ring hydroxylated E1 and E2 at the C15alpha and C16alpha positions. Displays different regioselectivities for polyunsaturated fatty acids (PUFA) hydroxylation. Catalyzes the epoxidation of double bonds of certain PUFA. Converts arachidonic acid toward epoxyeicosatrienoic acid (EET) regioisomers, 8,9-, 11,12-, and 14,15-EET, that function as lipid mediators in the vascular system. Displays an absolute stereoselectivity in the epoxidation of eicosapentaenoic acid (EPA) producing the 17(R),18(S) enantiomer. May play an important role in all-trans retinoic acid biosynthesis in extrahepatic tissues. Catalyzes two successive oxidative transformation of all-trans retinol to all-trans retinal and then to the active form all-trans retinoic acid. May also participate in eicosanoids metabolism by converting hydroperoxide species into oxo metabolites (lipoxygenase-like reaction, NADPH-independent). This chain is Cytochrome P450 1A1 (CYP1A1), found in Macaca fascicularis (Crab-eating macaque).